Here is a 33-residue protein sequence, read N- to C-terminus: Tail virion protein G9P (33 aa).

A helical membrane pass occupies residues 5–25; the sequence is VGSFLGAYFLGFALFYGIGFF.

Belongs to the inovirus G9P protein family.

It is found in the virion. Its subcellular location is the host membrane. Its function is as follows. May initiate with G7P the virion concomitant assembly-budding process, by interacting with the packaging signal of the viral genome. The assembly-budding takes place at the host inner membrane. In turn, G7P and G9P are present at the end of the filamentous virion that emerges first from the bacterial host. In Salmonella phage IKe (Bacteriophage IKe), this protein is Tail virion protein G9P (IX).